A 314-amino-acid chain; its full sequence is Homoserine O-succinyltransferase (314 aa).

Cys142 (acyl-thioester intermediate) is an active-site residue. Substrate contacts are provided by Lys163 and Ser192. His235 acts as the Proton acceptor in catalysis. Glu237 is an active-site residue. Arg249 is a substrate binding site.

This sequence belongs to the MetA family.

The protein localises to the cytoplasm. The enzyme catalyses L-homoserine + succinyl-CoA = O-succinyl-L-homoserine + CoA. It participates in amino-acid biosynthesis; L-methionine biosynthesis via de novo pathway; O-succinyl-L-homoserine from L-homoserine: step 1/1. In terms of biological role, transfers a succinyl group from succinyl-CoA to L-homoserine, forming succinyl-L-homoserine. The sequence is that of Homoserine O-succinyltransferase from Photobacterium profundum (strain SS9).